The chain runs to 246 residues: Aliphatic sulfonates import ATP-binding protein SsuB 2 (246 aa).

One can recognise an ABC transporter domain in the interval 4 to 218 (VTVRGLRRAF…RRDPRFEQAR (215 aa)). Position 36–43 (36–43 (GRSGGGKT)) interacts with ATP.

The protein belongs to the ABC transporter superfamily. Aliphatic sulfonates importer (TC 3.A.1.17.2) family. The complex is composed of two ATP-binding proteins (SsuB), two transmembrane proteins (SsuC) and a solute-binding protein (SsuA).

Its subcellular location is the cell membrane. It carries out the reaction ATP + H2O + aliphatic sulfonate-[sulfonate-binding protein]Side 1 = ADP + phosphate + aliphatic sulfonateSide 2 + [sulfonate-binding protein]Side 1.. Functionally, part of the ABC transporter complex SsuABC involved in aliphatic sulfonates import. Responsible for energy coupling to the transport system. The chain is Aliphatic sulfonates import ATP-binding protein SsuB 2 from Frankia alni (strain DSM 45986 / CECT 9034 / ACN14a).